The primary structure comprises 175 residues: Colicin-B immunity protein (175 aa).

The next 3 membrane-spanning stretches (helical) occupy residues 14–32 (ILYA…ILIL), 104–121 (CFWG…TLFY), and 149–168 (IYFT…LLVI).

The protein localises to the cell inner membrane. This protein is able to protect a cell, which harbors the plasmid ColB encoding colicin B, against colicin B. The polypeptide is Colicin-B immunity protein (cbi) (Escherichia coli).